Reading from the N-terminus, the 859-residue chain is DNA-directed RNA polymerase subunit Rpo1C (859 aa).

Belongs to the RNA polymerase beta' chain family. As to quaternary structure, part of the RNA polymerase complex. Post-translationally, this protein undergoes a protein self splicing that involves a post-translational excision of the intervening region (intein) followed by peptide ligation.

The protein resides in the cytoplasm. The enzyme catalyses RNA(n) + a ribonucleoside 5'-triphosphate = RNA(n+1) + diphosphate. DNA-dependent RNA polymerase (RNAP) catalyzes the transcription of DNA into RNA using the four ribonucleoside triphosphates as substrates. Forms part of the jaw domain. This chain is DNA-directed RNA polymerase subunit Rpo1C, found in Methanocaldococcus jannaschii (strain ATCC 43067 / DSM 2661 / JAL-1 / JCM 10045 / NBRC 100440) (Methanococcus jannaschii).